Reading from the N-terminus, the 946-residue chain is Protein translocase subunit SecA (946 aa).

Residues Q90, 108 to 112, and D509 each bind ATP; that span reads GEGKT.

The protein belongs to the SecA family. In terms of assembly, monomer and homodimer. Part of the essential Sec protein translocation apparatus which comprises SecA, SecYEG and auxiliary proteins SecDF. Other proteins may also be involved.

Its subcellular location is the cell inner membrane. The protein resides in the cellular thylakoid membrane. It localises to the cytoplasm. It catalyses the reaction ATP + H2O + cellular proteinSide 1 = ADP + phosphate + cellular proteinSide 2.. Its function is as follows. Part of the Sec protein translocase complex. Interacts with the SecYEG preprotein conducting channel. Has a central role in coupling the hydrolysis of ATP to the transfer of proteins into and across the cell membrane, serving as an ATP-driven molecular motor driving the stepwise translocation of polypeptide chains across the membrane. Probably participates in protein translocation into and across both the cytoplasmic and thylakoid membranes in cyanobacterial cells. The sequence is that of Protein translocase subunit SecA from Synechococcus sp. (strain RCC307).